The chain runs to 480 residues: Phosphomethylpyrimidine synthase (480 aa).

Substrate-binding positions include asparagine 66, methionine 95, tyrosine 124, histidine 159, 179 to 181 (SRG), 220 to 223 (DGLR), and glutamate 259. Histidine 263 is a Zn(2+) binding site. Residue tyrosine 286 participates in substrate binding. Histidine 327 is a Zn(2+) binding site. [4Fe-4S] cluster-binding residues include cysteine 407, cysteine 410, and cysteine 415. The segment at 426-480 (DGDMESIEADADDRTPLEDSSAAAVNRPPVGTHDGADIPGPDADMPADTEGSADD) is disordered. Acidic residues predominate over residues 470 to 480 (MPADTEGSADD).

Belongs to the ThiC family. The cofactor is [4Fe-4S] cluster.

It catalyses the reaction 5-amino-1-(5-phospho-beta-D-ribosyl)imidazole + S-adenosyl-L-methionine = 4-amino-2-methyl-5-(phosphooxymethyl)pyrimidine + CO + 5'-deoxyadenosine + formate + L-methionine + 3 H(+). Its pathway is cofactor biosynthesis; thiamine diphosphate biosynthesis. In terms of biological role, catalyzes the synthesis of the hydroxymethylpyrimidine phosphate (HMP-P) moiety of thiamine from aminoimidazole ribotide (AIR) in a radical S-adenosyl-L-methionine (SAM)-dependent reaction. This chain is Phosphomethylpyrimidine synthase, found in Haloarcula marismortui (strain ATCC 43049 / DSM 3752 / JCM 8966 / VKM B-1809) (Halobacterium marismortui).